Here is a 338-residue protein sequence, read N- to C-terminus: Lipoate-protein ligase A (338 aa).

A BPL/LPL catalytic domain is found at 29 to 216 (DPNQRVLFLW…AFFAHYGARV (188 aa)). ATP contacts are provided by residues R71, 76–79 (GAVF), and K134. Position 134 (K134) interacts with (R)-lipoate.

It belongs to the LplA family. Monomer.

It localises to the cytoplasm. The catalysed reaction is L-lysyl-[lipoyl-carrier protein] + (R)-lipoate + ATP = N(6)-[(R)-lipoyl]-L-lysyl-[lipoyl-carrier protein] + AMP + diphosphate + H(+). It functions in the pathway protein modification; protein lipoylation via exogenous pathway; protein N(6)-(lipoyl)lysine from lipoate: step 1/2. It participates in protein modification; protein lipoylation via exogenous pathway; protein N(6)-(lipoyl)lysine from lipoate: step 2/2. Its function is as follows. Catalyzes both the ATP-dependent activation of exogenously supplied lipoate to lipoyl-AMP and the transfer of the activated lipoyl onto the lipoyl domains of lipoate-dependent enzymes. This is Lipoate-protein ligase A from Aeromonas salmonicida (strain A449).